The following is a 310-amino-acid chain: Elongation factor Ts (310 aa).

The interval 80 to 83 is involved in Mg(2+) ion dislocation from EF-Tu; that stretch reads TDFV.

The protein belongs to the EF-Ts family.

Its subcellular location is the cytoplasm. Functionally, associates with the EF-Tu.GDP complex and induces the exchange of GDP to GTP. It remains bound to the aminoacyl-tRNA.EF-Tu.GTP complex up to the GTP hydrolysis stage on the ribosome. The protein is Elongation factor Ts of Beijerinckia indica subsp. indica (strain ATCC 9039 / DSM 1715 / NCIMB 8712).